The sequence spans 491 residues: Histamine H1 receptor (491 aa).

The Extracellular segment spans residues Met-1–Pro-30. N-linked (GlcNAc...) asparagine glycosylation is found at Asn-5 and Asn-18. A helical membrane pass occupies residues Leu-31–Tyr-51. Over Ala-52–Leu-65 the chain is Cytoplasmic. The chain crosses the membrane as a helical span at residues Tyr-66 to Leu-90. Residues Met-91–Arg-98 are Extracellular-facing. A helical transmembrane segment spans residues Pro-99–Ile-124. A disulfide bond links Cys-101 and Cys-181. Residues Asp-108 and Thr-113 each coordinate histamine. Positions Asp-108 to Thr-113 are important for agonist binding. Residues Asp-125–Ala-145 lie on the Cytoplasmic side of the membrane. Residues Thr-141 and Thr-143 each carry the phosphothreonine modification. Residues Ser-146–Gly-165 traverse the membrane as a helical segment. Residues Trp-166–Thr-189 are Extracellular-facing. A helical membrane pass occupies residues Trp-190–Ala-212. Asn-199 is a binding site for histamine. Topologically, residues Lys-213–Gln-420 are cytoplasmic. Phosphoserine is present on Ser-231. 2 disordered regions span residues Gln-246–Lys-297 and Gln-360–Ser-385. A compositionally biased stretch (basic and acidic residues) spans Pro-252 to Lys-262. Ser-384, Ser-400, and Ser-402 each carry phosphoserine. The helical transmembrane segment at Leu-421–Phe-444 threads the bilayer. Positions Phe-428–Trp-432 are important for agonist binding. Tyr-435 contributes to the histamine binding site. An intrachain disulfide couples Cys-445 to Cys-448. Residues Cys-445–Asn-450 lie on the Extracellular side of the membrane. Residues Gln-451–Pro-473 traverse the membrane as a helical segment. Topologically, residues Leu-474 to Ser-491 are cytoplasmic.

The protein belongs to the G-protein coupled receptor 1 family. In terms of processing, phosphorylation at sites in the second and third cytoplasmic loops independently contribute to agonist-induced receptor down-regulation. As to expression, brain, lung, small intestine, uterus, adrenal medulla and spleen.

Its subcellular location is the cell membrane. In terms of biological role, G-protein-coupled receptor for histamine, a biogenic amine that functions as an immune modulator and a neurotransmitter. Through the H1 receptor, histamine mediates the contraction of smooth muscles and increases capillary permeability due to contraction of terminal venules. Also mediates neurotransmission in the central nervous system and thereby regulates circadian rhythms, emotional and locomotor activities as well as cognitive functions. The chain is Histamine H1 receptor from Bos taurus (Bovine).